The sequence spans 686 residues: Mitochondrial Rho GTPase 1 (686 aa).

Residues methionine 1–arginine 648 are Cytoplasmic-facing. The 169-residue stretch at arginine 4 to histidine 172 folds into the Miro 1 domain. GTP contacts are provided by residues glycine 13–serine 20, aspartate 59–asparagine 63, and asparagine 117–aspartate 120. EF-hand domains follow at residues lysine 188 to threonine 223 and leucine 341 to asparagine 376. Ca(2+) is bound by residues aspartate 201, aspartate 203, aspartate 205, glutamate 212, aspartate 354, aspartate 356, aspartate 358, and glutamate 365. Residues arginine 455–aspartate 624 enclose the Miro 2 domain. GTP is bound by residues glycine 464 to threonine 471, glutamate 506 to valine 510, and threonine 574 to aspartate 577. The helical; Anchor for type IV membrane protein transmembrane segment at tryptophan 649–lysine 665 threads the bilayer. At tryptophan 666–threonine 686 the chain is on the mitochondrial intermembrane side.

It belongs to the mitochondrial Rho GTPase family.

It localises to the mitochondrion outer membrane. Its function is as follows. Mitochondrial GTPase involved in mitochondrial trafficking. Probably involved in control of anterograde transport of mitochondria and their subcellular distribution. This is Mitochondrial Rho GTPase 1 (GEM1) from Cryptococcus neoformans var. neoformans serotype D (strain B-3501A) (Filobasidiella neoformans).